The following is a 103-amino-acid chain: Cycloviolacin-O9 (103 aa).

An N-terminal signal peptide occupies residues 1–9 (AAFALPAFA). Positions 10–69 (SFEKDVITPAALEAVLNRKAPLYNIMMENDAILNVIANVKTVISNPVLEEALLKTNHGVN) are excised as a propeptide. The cyclopeptide (Gly-Asn) cross-link spans 70–99 (GIPCGESCVWIPCLTSAVGCSCKSKVCYRN). 3 disulfide bridges follow: Cys-73–Cys-89, Cys-77–Cys-91, and Cys-82–Cys-96. Residues 100 to 103 (SLDN) constitute a propeptide that is removed on maturation.

Post-translationally, this is a cyclic peptide.

Functionally, probably participates in a plant defense mechanism. This chain is Cycloviolacin-O9, found in Viola biflora (Yellow wood violet).